A 70-amino-acid chain; its full sequence is MMYKLGVLLIICLLLFPLTAVPQDGDQPADRPAERMQDDISFEHDRFFDPVKRCCKYGWTCWLGCSPCCG.

The signal sequence occupies residues 1–20 (MMYKLGVLLIICLLLFPLTA). The propeptide occupies 21 to 53 (VPQDGDQPADRPAERMQDDISFEHDRFFDPVKR). Cystine bridges form between Cys54-Cys69, Cys55-Cys65, and Cys61-Cys68. Position 67 is a 4-hydroxyproline; partial; in major form (Pro67). Cysteine amide is present on Cys69.

The protein belongs to the conotoxin M superfamily. Post-translationally, contains 3 disulfide bonds. As to expression, expressed by the venom duct.

It is found in the secreted. In terms of biological role, mu-conotoxins block voltage-gated sodium channels (Nav). The protein is Mu-conotoxin-like Am3.4 of Conus amadis (Amadis cone).